Reading from the N-terminus, the 141-residue chain is Pheromone-binding protein-related protein 6 (141 aa).

The N-terminal stretch at 1–16 (MVKYPLILLLIGCAAA) is a signal peptide. 3 cysteine pairs are disulfide-bonded: Cys41–Cys72, Cys68–Cys120, and Cys111–Cys129.

This sequence belongs to the PBP/GOBP family. As to expression, antenna. Mostly expressed in two types of sensory hairs, sensilla trichodea and small sensilla basiconica, in the ventro-lateral region of the third antennal segment (at protein level).

The protein resides in the secreted. The polypeptide is Pheromone-binding protein-related protein 6 (Obp83b) (Drosophila melanogaster (Fruit fly)).